We begin with the raw amino-acid sequence, 378 residues long: Probable endopolygalacturonase NFIA_008150 (378 aa).

The first 19 residues, 1–19, serve as a signal peptide directing secretion; that stretch reads MLKLIGSLVLLASAAEVIA. A propeptide spanning residues 20–35 is cleaved from the precursor; the sequence is SPLAESVAPSITLEKR. C38 and C56 are disulfide-bonded. 3 PbH1 repeats span residues 147–169, 170–200, and 201–222; these read TSSS…SING, CDGL…DIGS, and SSNI…AVNS. The active-site Proton donor is the D215. An intrachain disulfide couples C217 to C233. H237 is an active-site residue. 2 PbH1 repeats span residues 247 to 273 and 281 to 303; these read RSDN…RIKA and IKGI…LIEQ. Residue N254 is glycosylated (N-linked (GlcNAc...) asparagine). A glycan (N-linked (GlcNAc...) asparagine) is linked at N327. Cystine bridges form between C345-C350 and C369-C378.

This sequence belongs to the glycosyl hydrolase 28 family.

The protein localises to the secreted. It carries out the reaction (1,4-alpha-D-galacturonosyl)n+m + H2O = (1,4-alpha-D-galacturonosyl)n + (1,4-alpha-D-galacturonosyl)m.. Functionally, involved in maceration and soft-rotting of plant tissue. Hydrolyzes the 1,4-alpha glycosidic bonds of de-esterified pectate in the smooth region of the plant cell wall. This is Probable endopolygalacturonase NFIA_008150 from Neosartorya fischeri (strain ATCC 1020 / DSM 3700 / CBS 544.65 / FGSC A1164 / JCM 1740 / NRRL 181 / WB 181) (Aspergillus fischerianus).